Reading from the N-terminus, the 232-residue chain is Thiamine import ATP-binding protein ThiQ (232 aa).

The ABC transporter domain maps to leucine 2–isoleucine 230. An ATP-binding site is contributed by glycine 32–serine 39.

Belongs to the ABC transporter superfamily. Thiamine importer (TC 3.A.1.19.1) family. In terms of assembly, the complex is composed of two ATP-binding proteins (ThiQ), two transmembrane proteins (ThiP) and a solute-binding protein (ThiB).

It is found in the cell inner membrane. The enzyme catalyses thiamine(out) + ATP + H2O = thiamine(in) + ADP + phosphate + H(+). Part of the ABC transporter complex ThiBPQ involved in thiamine import. Responsible for energy coupling to the transport system. In Shigella sonnei (strain Ss046), this protein is Thiamine import ATP-binding protein ThiQ.